The chain runs to 389 residues: Large ribosomal subunit protein uL3 (389 aa).

A disordered region spans residues 1 to 36 (MSHRKFEHPRHGSLGFLPRKRSSRHRGKVKSFPKDD). Basic residues predominate over residues 18–31 (PRKRSSRHRGKVKS).

This sequence belongs to the universal ribosomal protein uL3 family.

Its subcellular location is the cytoplasm. The L3 protein is a component of the large subunit of cytoplasmic ribosomes. The sequence is that of Large ribosomal subunit protein uL3 (RPL3) from Oryza sativa subsp. japonica (Rice).